A 551-amino-acid polypeptide reads, in one-letter code: Probable aldehyde dehydrogenase (551 aa).

278-283 (GSSRVA) provides a ligand contact to NAD(+). The Proton acceptor role is filled by Glu297. Cys332 serves as the catalytic Nucleophile.

It belongs to the aldehyde dehydrogenase family. As to expression, in uninfected plants, highest levels found in stems. In plants infected with the flax rust, highest levels in leaves. Higher levels of expression in infected leaves than uninfected stems.

The enzyme catalyses an aldehyde + NAD(+) + H2O = a carboxylate + NADH + 2 H(+). Could be involved in facilitating the biotrophic relationship between the plant and the rust fungus. The chain is Probable aldehyde dehydrogenase (FIS1) from Linum usitatissimum (Flax).